We begin with the raw amino-acid sequence, 211 residues long: Urease accessory protein UreG (211 aa).

11 to 18 (GPVGAGKT) is a GTP binding site.

The protein belongs to the SIMIBI class G3E GTPase family. UreG subfamily. In terms of assembly, homodimer. UreD, UreF and UreG form a complex that acts as a GTP-hydrolysis-dependent molecular chaperone, activating the urease apoprotein by helping to assemble the nickel containing metallocenter of UreC. The UreE protein probably delivers the nickel.

The protein localises to the cytoplasm. Its function is as follows. Facilitates the functional incorporation of the urease nickel metallocenter. This process requires GTP hydrolysis, probably effectuated by UreG. The sequence is that of Urease accessory protein UreG from Actinobacillus pleuropneumoniae (Haemophilus pleuropneumoniae).